We begin with the raw amino-acid sequence, 286 residues long: Mitochondrial dicarboxylate carrier (286 aa).

Solcar repeat units follow at residues 7–87 (SRWY…MRDY), 100–187 (SKVL…AKQL), and 196–279 (DNIF…LRKH). A run of 3 helical transmembrane segments spans residues 9–29 (WYFGGLASCGAACCTHPLDLL), 62–81 (GLSASLCRQMTYSLTRFAIY), and 102–122 (VLLGGISGLTGGFVGTPADLV). K158 is modified (N6-acetyllysine). 3 consecutive transmembrane segments (helical) span residues 162–181 (GATMASSRGALVTVGQLSCY), 202–222 (FLSSFIAGGCATFLCQPLDVL), and 254–274 (GLVPAGVRLVPHTVLTFMFLE).

The protein belongs to the mitochondrial carrier (TC 2.A.29) family. As to expression, expressed most strongly in liver, then kidney, and at lower levels in heart and brain.

The protein resides in the mitochondrion inner membrane. The enzyme catalyses (S)-malate(in) + phosphate(out) = (S)-malate(out) + phosphate(in). The catalysed reaction is malonate(out) + (S)-malate(in) = malonate(in) + (S)-malate(out). It catalyses the reaction (S)-malate(in) + succinate(out) = (S)-malate(out) + succinate(in). It carries out the reaction (S)-malate(in) + sulfate(out) = (S)-malate(out) + sulfate(in). The enzyme catalyses malonate(out) + phosphate(in) = malonate(in) + phosphate(out). The catalysed reaction is succinate(out) + phosphate(in) = succinate(in) + phosphate(out). It catalyses the reaction sulfate(out) + phosphate(in) = sulfate(in) + phosphate(out). It carries out the reaction malonate(out) + succinate(in) = malonate(in) + succinate(out). Catalyzes the electroneutral exchange or flux of physiologically important metabolites such as dicarboxylates (malonate, malate, succinate), inorganic sulfur-containing anions, and phosphate, across mitochondrial inner membrane. Plays an important role in gluconeogenesis, fatty acid metabolism, urea synthesis, and sulfur metabolism, particularly in liver, by supplying the substrates for the different metabolic processes. Regulates fatty acid release from adipocytes, and contributes to systemic insulin sensitivity. The polypeptide is Mitochondrial dicarboxylate carrier (Rattus norvegicus (Rat)).